Reading from the N-terminus, the 275-residue chain is Large ribosomal subunit protein uL2c (275 aa).

Disordered regions lie at residues methionine 1–lysine 28 and proline 227–glycine 251. Residues threonine 10–serine 22 show a composition bias toward polar residues.

It belongs to the universal ribosomal protein uL2 family. In terms of assembly, part of the 50S ribosomal subunit.

The protein resides in the plastid. The protein localises to the chloroplast. This Rhodomonas salina (Cryptomonas salina) protein is Large ribosomal subunit protein uL2c (rpl2).